Reading from the N-terminus, the 460-residue chain is Probable asparagine--tRNA ligase, mitochondrial (460 aa).

The protein belongs to the class-II aminoacyl-tRNA synthetase family.

It localises to the mitochondrion matrix. The enzyme catalyses tRNA(Asn) + L-asparagine + ATP = L-asparaginyl-tRNA(Asn) + AMP + diphosphate + H(+). In Dictyostelium discoideum (Social amoeba), this protein is Probable asparagine--tRNA ligase, mitochondrial (asnS2).